Reading from the N-terminus, the 292-residue chain is Elongation factor Ts (292 aa).

Residues 79–82 (TDFV) are involved in Mg(2+) ion dislocation from EF-Tu.

This sequence belongs to the EF-Ts family.

It is found in the cytoplasm. Its function is as follows. Associates with the EF-Tu.GDP complex and induces the exchange of GDP to GTP. It remains bound to the aminoacyl-tRNA.EF-Tu.GTP complex up to the GTP hydrolysis stage on the ribosome. This is Elongation factor Ts from Staphylococcus epidermidis (strain ATCC 12228 / FDA PCI 1200).